We begin with the raw amino-acid sequence, 360 residues long: Peptide chain release factor 1 (360 aa).

At Q235 the chain carries N5-methylglutamine. Residues 284–293 show a composition bias toward basic and acidic residues; the sequence is ARRQQEESST. Residues 284-314 are disordered; that stretch reads ARRQQEESSTRRNLLGSGDRSDRNRTYNFPQ.

The protein belongs to the prokaryotic/mitochondrial release factor family. Post-translationally, methylated by PrmC. Methylation increases the termination efficiency of RF1.

The protein resides in the cytoplasm. Peptide chain release factor 1 directs the termination of translation in response to the peptide chain termination codons UAG and UAA. The sequence is that of Peptide chain release factor 1 from Erwinia tasmaniensis (strain DSM 17950 / CFBP 7177 / CIP 109463 / NCPPB 4357 / Et1/99).